The primary structure comprises 459 residues: Exodeoxyribonuclease 7 large subunit (459 aa).

This sequence belongs to the XseA family. In terms of assembly, heterooligomer composed of large and small subunits.

Its subcellular location is the cytoplasm. It catalyses the reaction Exonucleolytic cleavage in either 5'- to 3'- or 3'- to 5'-direction to yield nucleoside 5'-phosphates.. In terms of biological role, bidirectionally degrades single-stranded DNA into large acid-insoluble oligonucleotides, which are then degraded further into small acid-soluble oligonucleotides. This is Exodeoxyribonuclease 7 large subunit from Pseudomonas syringae pv. tomato (strain ATCC BAA-871 / DC3000).